The following is a 1588-amino-acid chain: Pentafunctional AROM polypeptide (1588 aa).

Positions 1 to 392 are 3-dehydroquinate synthase; the sequence is MVQLAKVPIL…YGDSAQFVSD (392 aa). NAD(+) contacts are provided by residues 43 to 45, 78 to 81, 109 to 111, and Asp114; these read DTN, ETSK, and GGV. Arg125 is a binding site for 7-phospho-2-dehydro-3-deoxy-D-arabino-heptonate. 134–135 is a binding site for NAD(+); sequence TS. 7-phospho-2-dehydro-3-deoxy-D-arabino-heptonate is bound by residues Asp141 and Lys147. Lys156 contacts NAD(+). Asn157 lines the 7-phospho-2-dehydro-3-deoxy-D-arabino-heptonate pocket. Residues 174-177 and Asn185 each bind NAD(+); that span reads WLET. Glu189 provides a ligand contact to Zn(2+). 7-phospho-2-dehydro-3-deoxy-D-arabino-heptonate is bound by residues 189-192 and Lys258; that span reads EVIK. Catalysis depends on Glu268, which acts as the Proton acceptor; for 3-dehydroquinate synthase activity. Residues 272 to 276 and His279 contribute to the 7-phospho-2-dehydro-3-deoxy-D-arabino-heptonate site; that span reads RNLLN. His279 lines the Zn(2+) pocket. His283 functions as the Proton acceptor; for 3-dehydroquinate synthase activity in the catalytic mechanism. 7-phospho-2-dehydro-3-deoxy-D-arabino-heptonate contacts are provided by His295 and Lys364. His295 serves as a coordination point for Zn(2+). Residues 405–871 form an EPSP synthase region; that stretch reads VYPFKDIPAD…WDVLHSELGA (467 aa). Catalysis depends on Cys853, which acts as the For EPSP synthase activity. The segment at 890–1080 is shikimate kinase; sequence SVVIIGMRAA…IPSGRSAFVC (191 aa). 895–902 contributes to the ATP binding site; the sequence is GMRAAGKT. The segment at 1081-1293 is 3-dehydroquinase; sequence LTFDDLTEQT…AAPGQLTVAQ (213 aa). His1198 (proton acceptor; for 3-dehydroquinate dehydratase activity) is an active-site residue. Lys1227 (schiff-base intermediate with substrate; for 3-dehydroquinate dehydratase activity) is an active-site residue. The shikimate dehydrogenase stretch occupies residues 1306 to 1588; sequence PKELFVVGKP…KAIFDAVTKE (283 aa).

This sequence in the N-terminal section; belongs to the sugar phosphate cyclases superfamily. Dehydroquinate synthase family. It in the 2nd section; belongs to the EPSP synthase family. The protein in the 3rd section; belongs to the shikimate kinase family. In the 4th section; belongs to the type-I 3-dehydroquinase family. This sequence in the C-terminal section; belongs to the shikimate dehydrogenase family. As to quaternary structure, homodimer. Zn(2+) serves as cofactor.

Its subcellular location is the cytoplasm. It catalyses the reaction 7-phospho-2-dehydro-3-deoxy-D-arabino-heptonate = 3-dehydroquinate + phosphate. The catalysed reaction is 3-dehydroquinate = 3-dehydroshikimate + H2O. The enzyme catalyses shikimate + NADP(+) = 3-dehydroshikimate + NADPH + H(+). It carries out the reaction shikimate + ATP = 3-phosphoshikimate + ADP + H(+). It catalyses the reaction 3-phosphoshikimate + phosphoenolpyruvate = 5-O-(1-carboxyvinyl)-3-phosphoshikimate + phosphate. It functions in the pathway metabolic intermediate biosynthesis; chorismate biosynthesis; chorismate from D-erythrose 4-phosphate and phosphoenolpyruvate: step 2/7. Its pathway is metabolic intermediate biosynthesis; chorismate biosynthesis; chorismate from D-erythrose 4-phosphate and phosphoenolpyruvate: step 3/7. It participates in metabolic intermediate biosynthesis; chorismate biosynthesis; chorismate from D-erythrose 4-phosphate and phosphoenolpyruvate: step 4/7. The protein operates within metabolic intermediate biosynthesis; chorismate biosynthesis; chorismate from D-erythrose 4-phosphate and phosphoenolpyruvate: step 5/7. It functions in the pathway metabolic intermediate biosynthesis; chorismate biosynthesis; chorismate from D-erythrose 4-phosphate and phosphoenolpyruvate: step 6/7. Its function is as follows. The AROM polypeptide catalyzes 5 consecutive enzymatic reactions in prechorismate polyaromatic amino acid biosynthesis. The protein is Pentafunctional AROM polypeptide of Saccharomyces cerevisiae (strain JAY291) (Baker's yeast).